Here is a 248-residue protein sequence, read N- to C-terminus: Non-specific acid phosphatase (248 aa).

Positions 1 to 20 (MKKLLAVFCAGAFVSTSVFA) are cleaved as a signal peptide.

Belongs to the class A bacterial acid phosphatase family.

It localises to the periplasm. The enzyme catalyses a phosphate monoester + H2O = an alcohol + phosphate. The sequence is that of Non-specific acid phosphatase (phoN) from Providencia stuartii.